The sequence spans 188 residues: dCTP deaminase (188 aa).

DCTP is bound by residues 111–116 (KSTYAR), 135–137 (TLE), Q156, Y170, and Q180. E137 functions as the Proton donor/acceptor in the catalytic mechanism.

It belongs to the dCTP deaminase family. As to quaternary structure, homotrimer.

It carries out the reaction dCTP + H2O + H(+) = dUTP + NH4(+). Its pathway is pyrimidine metabolism; dUMP biosynthesis; dUMP from dCTP (dUTP route): step 1/2. Functionally, catalyzes the deamination of dCTP to dUTP. This chain is dCTP deaminase, found in Ectopseudomonas mendocina (strain ymp) (Pseudomonas mendocina).